We begin with the raw amino-acid sequence, 305 residues long: Methionyl-tRNA formyltransferase (305 aa).

A (6S)-5,6,7,8-tetrahydrofolate-binding site is contributed by 111 to 114 (SLLP).

It belongs to the Fmt family.

The catalysed reaction is L-methionyl-tRNA(fMet) + (6R)-10-formyltetrahydrofolate = N-formyl-L-methionyl-tRNA(fMet) + (6S)-5,6,7,8-tetrahydrofolate + H(+). Functionally, attaches a formyl group to the free amino group of methionyl-tRNA(fMet). The formyl group appears to play a dual role in the initiator identity of N-formylmethionyl-tRNA by promoting its recognition by IF2 and preventing the misappropriation of this tRNA by the elongation apparatus. In Helicobacter pylori (strain P12), this protein is Methionyl-tRNA formyltransferase.